The chain runs to 238 residues: Ribonuclease PH (238 aa).

Residues Arg86 and 124-126 (GTR) each bind phosphate.

The protein belongs to the RNase PH family. As to quaternary structure, homohexameric ring arranged as a trimer of dimers.

It catalyses the reaction tRNA(n+1) + phosphate = tRNA(n) + a ribonucleoside 5'-diphosphate. Functionally, phosphorolytic 3'-5' exoribonuclease that plays an important role in tRNA 3'-end maturation. Removes nucleotide residues following the 3'-CCA terminus of tRNAs; can also add nucleotides to the ends of RNA molecules by using nucleoside diphosphates as substrates, but this may not be physiologically important. Probably plays a role in initiation of 16S rRNA degradation (leading to ribosome degradation) during starvation. This chain is Ribonuclease PH, found in Aliivibrio salmonicida (strain LFI1238) (Vibrio salmonicida (strain LFI1238)).